A 407-amino-acid chain; its full sequence is Tryptophan 2,3-dioxygenase B (407 aa).

Substrate contacts are provided by residues 71–75 (FIVTH) and arginine 143. Histidine 327 is a heme binding site. Residue threonine 341 coordinates substrate.

The protein belongs to the tryptophan 2,3-dioxygenase family. Homotetramer. Dimer of dimers. The cofactor is heme.

The enzyme catalyses L-tryptophan + O2 = N-formyl-L-kynurenine. Its pathway is amino-acid degradation; L-tryptophan degradation via kynurenine pathway; L-kynurenine from L-tryptophan: step 1/2. Functionally, heme-dependent dioxygenase that catalyzes the oxidative cleavage of the L-tryptophan (L-Trp) pyrrole ring and converts L-tryptophan to N-formyl-L-kynurenine. Catalyzes the oxidative cleavage of the indole moiety. The polypeptide is Tryptophan 2,3-dioxygenase B (Danio rerio (Zebrafish)).